A 319-amino-acid chain; its full sequence is Tetrahydromethanopterin S-methyltransferase subunit H (319 aa).

Belongs to the MtrH family. The complex is composed of 8 subunits; MtrA, MtrB, MtrC, MtrD, MtrE, MtrF, MtrG and MtrH.

The catalysed reaction is 5-methyl-5,6,7,8-tetrahydromethanopterin + coenzyme M + 2 Na(+)(in) = 5,6,7,8-tetrahydromethanopterin + methyl-coenzyme M + 2 Na(+)(out). The protein operates within one-carbon metabolism; methanogenesis from CO(2); methyl-coenzyme M from 5,10-methylene-5,6,7,8-tetrahydromethanopterin: step 2/2. Its function is as follows. Part of a complex that catalyzes the formation of methyl-coenzyme M and tetrahydromethanopterin from coenzyme M and methyl-tetrahydromethanopterin. This is an energy-conserving, sodium-ion translocating step. MtrH catalyzes the transfer of the methyl group from methyl-tetrahydromethanopterin to the corrinoid prosthetic group of MtrA. The protein is Tetrahydromethanopterin S-methyltransferase subunit H of Methanococcus maripaludis (strain DSM 14266 / JCM 13030 / NBRC 101832 / S2 / LL).